The sequence spans 484 residues: uncharacterized protein (484 aa).

Residues 25 to 45 traverse the membrane as a helical segment; that stretch reads PLSLFVVLAAVPLPIYFSGLL. One can recognise an EF-hand domain in the interval 384 to 419; sequence LSFEETKELWVRADLDGNGVFDYEELKKIWNMTMVN. Residues D397, D399, N401, and E408 each coordinate Ca(2+).

It localises to the membrane. This is an uncharacterized protein from Arabidopsis thaliana (Mouse-ear cress).